The following is a 236-amino-acid chain: Phosphoribosylaminoimidazole-succinocarboxamide synthase (236 aa).

The protein belongs to the SAICAR synthetase family.

It carries out the reaction 5-amino-1-(5-phospho-D-ribosyl)imidazole-4-carboxylate + L-aspartate + ATP = (2S)-2-[5-amino-1-(5-phospho-beta-D-ribosyl)imidazole-4-carboxamido]succinate + ADP + phosphate + 2 H(+). Its pathway is purine metabolism; IMP biosynthesis via de novo pathway; 5-amino-1-(5-phospho-D-ribosyl)imidazole-4-carboxamide from 5-amino-1-(5-phospho-D-ribosyl)imidazole-4-carboxylate: step 1/2. The chain is Phosphoribosylaminoimidazole-succinocarboxamide synthase from Rickettsia typhi (strain ATCC VR-144 / Wilmington).